Here is a 358-residue protein sequence, read N- to C-terminus: Phospho-N-acetylmuramoyl-pentapeptide-transferase (358 aa).

A run of 10 helical transmembrane segments spans residues 21-41, 71-91, 95-115, 133-153, 166-186, 197-217, 234-254, 261-281, 286-306, and 337-357; these read YLTLRAILGVLTALVISFVVG, TMGGALILVAIAAATLLWADL, YIWVVLVVTLLFGGVGFVDDY, FWQSVIALGVALFLYFTASVA, VAVNLGGYYVLLTYFVVVGSS, GLAVLPTVLVGGALGIFAYAA, AGELVVFCGALVGAGLGFLWF, VFMGDIGALALGAALGILAVL, LVLFIMGGVFVVETVSVMLQV, and IVRFWIITVILVLIGLATLKI.

Belongs to the glycosyltransferase 4 family. MraY subfamily. It depends on Mg(2+) as a cofactor.

The protein resides in the cell inner membrane. The catalysed reaction is UDP-N-acetyl-alpha-D-muramoyl-L-alanyl-gamma-D-glutamyl-meso-2,6-diaminopimeloyl-D-alanyl-D-alanine + di-trans,octa-cis-undecaprenyl phosphate = di-trans,octa-cis-undecaprenyl diphospho-N-acetyl-alpha-D-muramoyl-L-alanyl-D-glutamyl-meso-2,6-diaminopimeloyl-D-alanyl-D-alanine + UMP. The protein operates within cell wall biogenesis; peptidoglycan biosynthesis. Catalyzes the initial step of the lipid cycle reactions in the biosynthesis of the cell wall peptidoglycan: transfers peptidoglycan precursor phospho-MurNAc-pentapeptide from UDP-MurNAc-pentapeptide onto the lipid carrier undecaprenyl phosphate, yielding undecaprenyl-pyrophosphoryl-MurNAc-pentapeptide, known as lipid I. The protein is Phospho-N-acetylmuramoyl-pentapeptide-transferase of Nitrosococcus oceani (strain ATCC 19707 / BCRC 17464 / JCM 30415 / NCIMB 11848 / C-107).